A 286-amino-acid polypeptide reads, in one-letter code: MRLHKIFYALFENRLSDNLEELVQGKKAVESPTAFLLGGQPGSGKTSLRSAIFEETQGNVIVIDNDTFKQQHPNFDELVKLYEKDVVKHVTPYSNRMTEAIISRLSDKGYNLVIEGTGRTTDVPIQTATMLQAKGYETKMYVMAVPKINSYLGTIERYETMYADDPMTARATPKQAHDIAVKNLPTNLETLHKTGLFSDIRLYNREGVKLYSSLETPSISPKETLERELNRKISGKEIQPTLERIEQKMVQNQHQETPEFKAIQQKMESLQPPTPPIPKTPKLPGI.

Residue 39–46 (GQPGSGKT) participates in ATP binding. Residues 249–286 (MVQNQHQETPEFKAIQQKMESLQPPTPPIPKTPKLPGI) form a disordered region. Residues 272-286 (PPTPPIPKTPKLPGI) are compositionally biased toward pro residues.

The protein belongs to the zeta toxin family. In terms of assembly, in the presence of the epsilon antitoxin, forms an inactive PezA(2)PezT(2) heterotetramer.

The catalysed reaction is UDP-N-acetyl-alpha-D-glucosamine + ATP = UDP-N-acetyl-alpha-D-glucosamine 3'-phosphate + ADP + H(+). In terms of biological role, toxic component of a type II toxin-antitoxin (TA) system. Phosphorylates UDP-N-acetyl-D-glucosamine (UNAG) on the 3'-hydroxyl group of the N-acetyl-D-glucosamine moiety, yielding UNAG-3P. UNAG-3P inhibits MurA, the first committed step in cell wall synthesis, which is then blocked. Phosphorylation is inhibited by cognate epsilon antitoxin. Part of a postsegregational killing (PSK) system involved in the killing of plasmid-free cells. The zeta toxin induces programmed cell death. The protein is Toxin zeta of Enterococcus hirae.